A 93-amino-acid chain; its full sequence is DNA-binding protein HU 1 (93 aa).

This sequence belongs to the bacterial histone-like protein family. In terms of assembly, homodimer.

The protein localises to the cytoplasm. Its subcellular location is the nucleoid. Histone-like DNA-binding protein which is capable of wrapping DNA to stabilize it, and thus to prevent its denaturation under extreme environmental conditions. The chain is DNA-binding protein HU 1 (hup1) from Streptomyces coelicolor (strain ATCC BAA-471 / A3(2) / M145).